A 1303-amino-acid chain; its full sequence is Latent-transforming growth factor beta-binding protein 3 (1303 aa).

Positions 1–43 (MPGPRGAAGGLAPEMRGAGAAGLLALLLLLLLLLLGLGGRVEG) are cleaved as a signal peptide. The N-linked (GlcNAc...) asparagine glycan is linked to asparagine 89. Residues 109-141 (RVVVCPLPCMNGGQCSSRNQCLCPPDFTGRFCQ) enclose the EGF-like 1 domain. Cystine bridges form between cysteine 113/cysteine 123, cysteine 117/cysteine 129, cysteine 131/cysteine 140, cysteine 279/cysteine 303, cysteine 289/cysteine 316, and cysteine 304/cysteine 319. The interval 247–282 (SSNAESAAPSQHLLPHPKPSHPRPPTQKPLGRCFQD) is disordered. Residues 277–331 (GRCFQDTLPKQPCGSNPLPGLTKQEDCCGSIGTAWGQSKCHKCPQLQYTGVQKPG) form the TB 1 domain. Asparagine 349 carries N-linked (GlcNAc...) asparagine glycosylation. The 41-residue stretch at 355 to 395 (DINECAMPGVCRHGDCLNNPGSYRCVCPPGHSLGPSRTQCI) folds into the EGF-like 2; calcium-binding domain. 7 cysteine pairs are disulfide-bonded: cysteine 359–cysteine 370, cysteine 365–cysteine 379, cysteine 381–cysteine 394, cysteine 405–cysteine 428, cysteine 415–cysteine 440, cysteine 429–cysteine 443, and cysteine 430–cysteine 455. The 53-residue stretch at 403–455 (SLCFRLVSPEHQCQHPLTTRLTRQLCCCSVGKAWGARCQRCPTDGTAAFKEIC) folds into the TB 2 domain. The disordered stretch occupies residues 478-552 (FSLFLHPDGP…ISRPSPPTMR (75 aa)). Positions 529–540 (PTATTTPARPYP) are enriched in low complexity. An EGF-like 3 domain is found at 574-615 (ETDECRLNQNICGHGECVPGPPDYSCHCNPGYRSHPQHRYCV). 37 cysteine pairs are disulfide-bonded: cysteine 578–cysteine 590, cysteine 585–cysteine 599, cysteine 601–cysteine 614, cysteine 620–cysteine 632, cysteine 625–cysteine 641, cysteine 664–cysteine 676, cysteine 670–cysteine 685, cysteine 687–cysteine 701, cysteine 748–cysteine 759, cysteine 754–cysteine 768, cysteine 770–cysteine 783, cysteine 789–cysteine 800, cysteine 795–cysteine 809, cysteine 811–cysteine 824, cysteine 830–cysteine 841, cysteine 836–cysteine 850, cysteine 852–cysteine 864, cysteine 870–cysteine 883, cysteine 877–cysteine 892, cysteine 894–cysteine 907, cysteine 919–cysteine 942, cysteine 929–cysteine 954, cysteine 943–cysteine 959, cysteine 944–cysteine 971, cysteine 997–cysteine 1010, cysteine 1005–cysteine 1019, cysteine 1021–cysteine 1034, cysteine 1040–cysteine 1051, cysteine 1046–cysteine 1060, cysteine 1062–cysteine 1075, cysteine 1086–cysteine 1097, cysteine 1092–cysteine 1106, cysteine 1108–cysteine 1121, cysteine 1138–cysteine 1162, cysteine 1148–cysteine 1174, cysteine 1163–cysteine 1177, and cysteine 1164–cysteine 1186. Positions 616-659 (DVNECEAEPCGPGRGICMNTGGSYNCHCNRGYRLHVGAGGRSCV) constitute an EGF-like 4; calcium-binding domain. Residues 660–702 (DLNECAKPHLCGDGGFCINFPGHYKCNCYPGYRLKASRPPVCE) enclose the EGF-like 5; calcium-binding domain. Residues 744 to 784 (DVNECAEGSPCSPGWCENLPGSFRCTCAQGYAPAPDGRSCL) enclose the EGF-like 6; calcium-binding domain. Residues 785 to 825 (DVDECEAGDVCDNGICSNTPGSFQCQCLSGYHLSRDRSHCE) form the EGF-like 7; calcium-binding domain. The 40-residue stretch at 826–865 (DIDECDFPAACIGGDCINTNGSYRCLCPQGHRLVGGRKCQ) folds into the EGF-like 8; calcium-binding domain. Asparagine 845 carries N-linked (GlcNAc...) asparagine glycosylation. The 43-residue stretch at 866–908 (DIDECSQDPSLCLPHGACKNLQGSYVCVCDEGFTPTQDQHGCE) folds into the EGF-like 9; calcium-binding domain. The 55-residue stretch at 917-971 (KECYLNFDDTVFCDSVLATNVTQQECCCSLGAGWGDHCEIYPCPVYSSAEFHSLC) folds into the TB 3 domain. Asparagine 936 is a glycosylation site (N-linked (GlcNAc...) asparagine). An EGF-like 10; calcium-binding domain is found at 993–1035 (DIDECMLFGSEICKEGKCVNTQPGYECYCKQGFYYDGNLLECV). In terms of domain architecture, EGF-like 11; calcium-binding spans 1036-1076 (DVDECLDESNCRNGVCENTRGGYRCACTPPAEYSPAQRQCL). Residues 1082-1122 (DVDECQDPAACRPGRCVNLPGSYRCECRPPWVPGPSGRDCQ) form the EGF-like 12; calcium-binding domain. Residues 1136-1186 (DVCWSQRGEDGMCAGPLAGPALTFDDCCCRQGRGWGAQCRPCPPRGAGSHC) form the TB 4 domain. Polar residues predominate over residues 1188-1198 (TSQSESNSFWD). Residues 1188–1219 (TSQSESNSFWDTSPLLLGKPPRDEDSSEEDSD) form a disordered region. Positions 1254-1298 (DIDECRELNQRGLLCKSERCVNTSGSFRCVCKAGFARSRPHGACV) constitute an EGF-like 13; calcium-binding domain. Intrachain disulfides connect cysteine 1258-cysteine 1273 and cysteine 1268-cysteine 1282. Asparagine 1275 is a glycosylation site (N-linked (GlcNAc...) asparagine).

It belongs to the LTBP family. In terms of assembly, forms part of the large latent transforming growth factor beta precursor complex; removal is essential for activation of complex. Interacts with EFEMP2. Post-translationally, contains hydroxylated asparagine residues. In terms of processing, two intrachain disulfide bonds from the TB3 domain are rearranged upon TGFB1 binding, and form interchain bonds with TGFB1 propeptide, anchoring it to the extracellular matrix. Isoform 2: Expressed prominently in heart, skeletal muscle, prostate, testis, small intestine and ovary. Isoform 1: Strongly expressed in pancreas and liver.

The protein localises to the secreted. Its subcellular location is the extracellular space. It is found in the extracellular matrix. Its function is as follows. Key regulator of transforming growth factor beta (TGFB1, TGFB2 and TGFB3) that controls TGF-beta activation by maintaining it in a latent state during storage in extracellular space. Associates specifically via disulfide bonds with the Latency-associated peptide (LAP), which is the regulatory chain of TGF-beta, and regulates integrin-dependent activation of TGF-beta. The chain is Latent-transforming growth factor beta-binding protein 3 (LTBP3) from Homo sapiens (Human).